The following is an 855-amino-acid chain: MTDLSQHTPMMQQYFKLKHQHPDQLMFYRMGDFYELFYEDAKKAAKLLDITLTARGQSGGKAIPMAGIPFHSAEGYLAKLVKLGESVAICEQIGDPATSKGPVERQVVRIITPGTVSDEALLDERRDNLLAAILGDERLFGLAVLDITSGRFSVQEIKGWETLLAELERLNPAELLIPDDWPQGLPSEKRRGVRRRAPWDFDRDSAHKSLCQQFGTQDLKGFGCQNLTLAIGAAGCLLAYAKETQRTALPHLRSLRHDRLDDTVILDGASRRNLELDINLSGGRENTLQSVVDRCQTAMASRLMSRWLNRPLRDRAVLEARQESIACLLERYRFENLQPQLKEIGDLERILARIGLRNARPRDLARLRDALAALPDLQNAMTELEAPHLQALATTIGTYPELAELLAKAIIDNPPAVIRDGGVIKTGYDAELDELQALSENAGQFLMDLEAREKARTGLPNLKVGYNRIHGYFIELPRVQAEQAPADYIRRQTLKGAERFITPELKAFEDKALSAQSRALAREKALYEELLERLIGHLAPLQDSASALAELDVLANLAERALNLDLNRPRFVEHTCLHIEQGRHPVVEQVLETPFVANDLALDADTRMLVITGPNMGGKSTYMRQTALIVLLAHIGSFVPAARCELSLVDRIFTRIGSSDDLAGGRSTFMVEMSETANILHNATDKSLVLMDEVGRGTSTFDGLSLAWAAAEDLARTRAFTLFATHYFELTVLPESQPAVANVHLNATEHNERIVFLHHVLPGPASQSYGLAVAQLAGVPAPVIQRAREHLKRLETTSLPHEMPSQQSGKPASPMQSDLFASLPHPVIDELSRINPDDISPRQALDLLYAWKMRV.

613–620 contacts ATP; it reads GPNMGGKS. The segment at 796–816 is disordered; it reads TTSLPHEMPSQQSGKPASPMQ.

Belongs to the DNA mismatch repair MutS family.

In terms of biological role, this protein is involved in the repair of mismatches in DNA. It is possible that it carries out the mismatch recognition step. This protein has a weak ATPase activity. This is DNA mismatch repair protein MutS from Pseudomonas aeruginosa (strain LESB58).